The primary structure comprises 424 residues: UDP-N-acetylglucosamine 1-carboxyvinyltransferase (424 aa).

Position 22–23 (22–23 (KN)) interacts with phosphoenolpyruvate. A UDP-N-acetyl-alpha-D-glucosamine-binding site is contributed by arginine 93. Residue cysteine 117 is the Proton donor of the active site. Residue cysteine 117 is modified to 2-(S-cysteinyl)pyruvic acid O-phosphothioketal. UDP-N-acetyl-alpha-D-glucosamine-binding positions include 122–126 (RPIDL), aspartate 307, and isoleucine 329.

This sequence belongs to the EPSP synthase family. MurA subfamily.

Its subcellular location is the cytoplasm. It carries out the reaction phosphoenolpyruvate + UDP-N-acetyl-alpha-D-glucosamine = UDP-N-acetyl-3-O-(1-carboxyvinyl)-alpha-D-glucosamine + phosphate. Its pathway is cell wall biogenesis; peptidoglycan biosynthesis. Functionally, cell wall formation. Adds enolpyruvyl to UDP-N-acetylglucosamine. The chain is UDP-N-acetylglucosamine 1-carboxyvinyltransferase from Chlorobium phaeovibrioides (strain DSM 265 / 1930) (Prosthecochloris vibrioformis (strain DSM 265)).